The primary structure comprises 529 residues: Ectonucleoside triphosphate diphosphohydrolase 3 (529 aa).

Residues 1 to 22 are Cytoplasmic-facing; sequence MFTVMTRQPCEQAGFRALSRTP. The helical transmembrane segment at 23 to 43 threads the bilayer; it reads AIVTLVVLLVSIVVLVTLTLI. Topologically, residues 44 to 485 are extracellular; that stretch reads QIRHPQVLPP…PLIHLPIQPP (442 aa). N81 is a glycosylation site (N-linked (GlcNAc...) asparagine). C92 and C116 are joined by a disulfide. An N-linked (GlcNAc...) asparagine glycan is attached at N149. E182 functions as the Proton acceptor in the catalytic mechanism. 222-226 serves as a coordination point for ATP; sequence GASTQ. N238, N284, and N318 each carry an N-linked (GlcNAc...) asparagine glycan. 3 disulfides stabilise this stretch: C261-C308, C289-C334, and C347-C353. N-linked (GlcNAc...) asparagine glycans are attached at residues N381 and N392. Residues C399 and C422 are joined by a disulfide bond. N454 carries an N-linked (GlcNAc...) asparagine glycan. The chain crosses the membrane as a helical span at residues 486–506; it reads VFMGVLAFFTAIALLCLAFLL. Residues 507–529 are Cytoplasmic-facing; that stretch reads YLCSSFRTKERSENAFDQAVDSD.

The protein belongs to the GDA1/CD39 NTPase family. It depends on Ca(2+) as a cofactor. Mg(2+) is required as a cofactor.

The protein resides in the cell membrane. The enzyme catalyses a ribonucleoside 5'-triphosphate + 2 H2O = a ribonucleoside 5'-phosphate + 2 phosphate + 2 H(+). Functionally, catalyzes the hydrolysis of nucleoside triphosphates and diphosphates. Has a threefold preference for the hydrolysis of ATP and UTP over ADP and UDP. The polypeptide is Ectonucleoside triphosphate diphosphohydrolase 3 (Mus musculus (Mouse)).